We begin with the raw amino-acid sequence, 364 residues long: Dual-specificity RNA methyltransferase RlmN (364 aa).

Catalysis depends on E91, which acts as the Proton acceptor. Positions E97 to D333 constitute a Radical SAM core domain. Residues C104 and C338 are joined by a disulfide bond. [4Fe-4S] cluster is bound by residues C111, C115, and C118. S-adenosyl-L-methionine is bound by residues G164 to E165, S196, S218 to H220, and N295. The active-site S-methylcysteine intermediate is the C338.

Belongs to the radical SAM superfamily. RlmN family. [4Fe-4S] cluster is required as a cofactor.

The protein localises to the cytoplasm. It catalyses the reaction adenosine(2503) in 23S rRNA + 2 reduced [2Fe-2S]-[ferredoxin] + 2 S-adenosyl-L-methionine = 2-methyladenosine(2503) in 23S rRNA + 5'-deoxyadenosine + L-methionine + 2 oxidized [2Fe-2S]-[ferredoxin] + S-adenosyl-L-homocysteine. The catalysed reaction is adenosine(37) in tRNA + 2 reduced [2Fe-2S]-[ferredoxin] + 2 S-adenosyl-L-methionine = 2-methyladenosine(37) in tRNA + 5'-deoxyadenosine + L-methionine + 2 oxidized [2Fe-2S]-[ferredoxin] + S-adenosyl-L-homocysteine. Specifically methylates position 2 of adenine 2503 in 23S rRNA and position 2 of adenine 37 in tRNAs. m2A2503 modification seems to play a crucial role in the proofreading step occurring at the peptidyl transferase center and thus would serve to optimize ribosomal fidelity. The protein is Dual-specificity RNA methyltransferase RlmN of Neisseria gonorrhoeae (strain ATCC 700825 / FA 1090).